A 75-amino-acid polypeptide reads, in one-letter code: Small ribosomal subunit protein bS16 (75 aa).

Belongs to the bacterial ribosomal protein bS16 family.

The chain is Small ribosomal subunit protein bS16 from Helicobacter pylori (strain G27).